Consider the following 400-residue polypeptide: Phosphoglycerate kinase (400 aa).

Substrate contacts are provided by residues Asp23–Asn25, Arg38, His61–Arg64, Arg120, and Arg153. Residues Lys203, Glu325, and Gly355 to Thr358 each bind ATP.

Belongs to the phosphoglycerate kinase family. As to quaternary structure, monomer.

Its subcellular location is the cytoplasm. The catalysed reaction is (2R)-3-phosphoglycerate + ATP = (2R)-3-phospho-glyceroyl phosphate + ADP. Its pathway is carbohydrate degradation; glycolysis; pyruvate from D-glyceraldehyde 3-phosphate: step 2/5. This Methylobacterium radiotolerans (strain ATCC 27329 / DSM 1819 / JCM 2831 / NBRC 15690 / NCIMB 10815 / 0-1) protein is Phosphoglycerate kinase.